Consider the following 563-residue polypeptide: Probable trehalase (563 aa).

Residues Arg154, 161–162, Asn198, 207–209, 274–276, and Gly307 each bind substrate; these read WD, RSQ, and RPE. Active-site proton donor/acceptor residues include Asp309 and Glu517. Residue Glu532 coordinates substrate.

Belongs to the glycosyl hydrolase 37 family.

The catalysed reaction is alpha,alpha-trehalose + H2O = alpha-D-glucose + beta-D-glucose. Its function is as follows. Involved in the regulation of trehalose content by hydrolyzing trehalose to glucose. The polypeptide is Probable trehalase (Oryza sativa subsp. japonica (Rice)).